The chain runs to 114 residues: Secretoglobin family 2B member 2 (114 aa).

The first 23 residues, 1–23 (MKGTLLLLALLVTGELGFQRTEA), serve as a signal peptide directing secretion.

The protein belongs to the secretoglobin family. In terms of tissue distribution, expressed in lacrimal gland.

The protein localises to the secreted. This is Secretoglobin family 2B member 2 (Scgb2b2) from Mus musculus (Mouse).